The primary structure comprises 250 residues: MSGHSKWATTKHKKAVIDARRGKMFARLIKNIEVAARVGGGDPAGNPTLYDAIQKAKKSSVPNENIERARKRGAGEEAGGADWQTITYEGYAPNGVAVLIECLTDNRNRAASEVRVAMTRNGGTMADPGSVSYLFSRKSVVTCEKNGLTEDDILAAVLDAGAEEVEDLGDSFEIICEPTDLVAVRTALQDAGIDYDSAEAGFQPSVTVPLNADGAQKVMRLVDALEDSDDVQDVWTNADIPDEILAQIEE.

The protein belongs to the TACO1 family.

Its subcellular location is the cytoplasm. This Mycolicibacterium paratuberculosis (strain ATCC BAA-968 / K-10) (Mycobacterium paratuberculosis) protein is Probable transcriptional regulatory protein MAP_1030.